We begin with the raw amino-acid sequence, 956 residues long: Valine--tRNA ligase (956 aa).

The 'HIGH' region signature appears at 69–79; that stretch reads PNITGVLHMGH. Positions 566–570 match the 'KMSKS' region motif; it reads KMSKS. An ATP-binding site is contributed by K569. A coiled-coil region spans residues 885-911; that stretch reads LCARLQKAWQKARQKVQQVERKLADAQ.

Belongs to the class-I aminoacyl-tRNA synthetase family. ValS type 1 subfamily. As to quaternary structure, monomer.

It is found in the cytoplasm. It carries out the reaction tRNA(Val) + L-valine + ATP = L-valyl-tRNA(Val) + AMP + diphosphate. In terms of biological role, catalyzes the attachment of valine to tRNA(Val). As ValRS can inadvertently accommodate and process structurally similar amino acids such as threonine, to avoid such errors, it has a 'posttransfer' editing activity that hydrolyzes mischarged Thr-tRNA(Val) in a tRNA-dependent manner. In Treponema pallidum (strain Nichols), this protein is Valine--tRNA ligase.